The primary structure comprises 875 residues: Protein HIR2 (875 aa).

6 WD repeats span residues 10–47 (IHNE…DTAF), 118–158 (KSPS…KLSE), 163–201 (KASK…THKL), 237–277 (PNNA…PAFY), 278–316 (EKPN…PLFN), and 320–359 (VSST…LGVA). The tract at residues 398-473 (ESASAAPIPN…IAPGSKKQKK (76 aa)) is disordered. Positions 424 to 446 (ANNQTNGIKTIQSTSMEFNTPSY) are enriched in polar residues. WD repeat units follow at residues 546 to 587 (LFQD…LMAP) and 589 to 626 (VLGV…LAFP). The residue at position 713 (serine 713) is a Phosphoserine.

Belongs to the WD repeat HIR1 family. In terms of assembly, component of the HIR complex, composed of HIR1, HIR2, HIR3 and HPC2. This complex may consist of one copy of HIR1 and HIR3 and two copies of HIR2 and HPC2. The HIR complex interacts with ASF1. Interacts with SNF2. Interacts with SNF5. Interacts with SWI3. Interacts with RTT106.

It is found in the nucleus. Its subcellular location is the chromosome. Its function is as follows. Component of the HIR complex, which cooperates with ASF1 to promote replication-independent chromatin assembly. The HIR complex is also required for the periodic repression of three of the four histone gene loci during the cell cycle as well as for autogenous regulation of the HTA1-HTB1 locus by H2A and H2B. DNA-binding by the HIR complex may repress transcription by inhibiting nucleosome remodeling by the SWI/SNF complex. The HIR complex may also be required for transcriptional silencing of centromeric, telomeric and mating-type loci in the absence of CAF-1. The polypeptide is Protein HIR2 (HIR2) (Saccharomyces cerevisiae (strain ATCC 204508 / S288c) (Baker's yeast)).